A 152-amino-acid chain; its full sequence is FAD synthase (152 aa).

ATP contacts are provided by residues 9-10 (TF), 14-17 (HPGH), and aspartate 92.

It belongs to the archaeal FAD synthase family. Homodimer. A divalent metal cation is required as a cofactor.

It carries out the reaction FMN + ATP + H(+) = FAD + diphosphate. It functions in the pathway cofactor biosynthesis; FAD biosynthesis; FAD from FMN: step 1/1. Functionally, catalyzes the transfer of the AMP portion of ATP to flavin mononucleotide (FMN) to produce flavin adenine dinucleotide (FAD) coenzyme. The sequence is that of FAD synthase from Ferroglobus placidus (strain DSM 10642 / AEDII12DO).